We begin with the raw amino-acid sequence, 399 residues long: Probable endo-xylogalacturonan hydrolase A (399 aa).

Residues 1–19 (MTFGKAAFLSFSLFGASWA) form the signal peptide. PbH1 repeat units lie at residues 177 to 207 (TTNAVFSDMRLDATSKSENLPKNTDGFDIGE), 208 to 229 (STYVTISGTTVSNNDDCVAFKP), 231 to 251 (CNYLTVTDITCTGSHGLSVGS), 260 to 283 (VQNVRVEGATMISSTKAAGIKTYP), and 293 to 314 (VTNVTWKDITIQNCDYAIQIQS). The Proton donor role is filled by Asp-222. The active site involves His-245. Asn-295 and Asn-382 each carry an N-linked (GlcNAc...) asparagine glycan.

The protein belongs to the glycosyl hydrolase 28 family.

It localises to the secreted. In terms of biological role, pectinolytic enzyme involved in the degradation of xylogalacturonan (xga), a galacturonan backbone heavily substituted with xylose, and which is one important component of the hairy regions of pectin. Activity requires a galacturonic acid backbone substituted with xylose. This chain is Probable endo-xylogalacturonan hydrolase A (xghA), found in Emericella nidulans (strain FGSC A4 / ATCC 38163 / CBS 112.46 / NRRL 194 / M139) (Aspergillus nidulans).